A 626-amino-acid polypeptide reads, in one-letter code: Chaperone protein HtpG (626 aa).

The tract at residues 1-341 (METKQFKAES…SEDLSLNISR (341 aa)) is a; substrate-binding. Positions 342 to 552 (EILQHDRQLK…EGELSIEMEK (211 aa)) are b. The disordered stretch occupies residues 490–509 (DLGIEGEEKENTSSSDDKEN). Basic and acidic residues predominate over residues 498–509 (KENTSSSDDKEN). Residues 553-626 (VLNAMPNNQN…FTNNICKIMK (74 aa)) are c.

Belongs to the heat shock protein 90 family. Homodimer.

Its subcellular location is the cytoplasm. In terms of biological role, molecular chaperone. Has ATPase activity. This is Chaperone protein HtpG from Clostridium botulinum (strain Okra / Type B1).